A 122-amino-acid polypeptide reads, in one-letter code: Autophagy-related protein 8e (122 aa).

A lipid anchor (Phosphatidylethanolamine amidated glycine) is attached at Gly118. Positions 119–122 are cleaved as a propeptide — removed in mature form; it reads ASSI.

The protein belongs to the ATG8 family. As to quaternary structure, interacts with ATG4. Interacts with SH3P2. Interacts with ATG1A and ATG11. Binds to ATG1A and ATG11 on autophagic vesicles. In terms of processing, the C-terminal 4 residues are removed by ATG4 to expose Gly-118 at the C-terminus. This Gly-118 forms then a thioester bond with the 'Cys-558' of ATG7 (E1-like activating enzyme) before being transferred to the 'Cys-258' of ATG3 (the specific E2 conjugating enzyme), in order to be finally amidated with phosphatidylethanolamine. This lipid modification anchors ATG8 to autophagosomes. In terms of tissue distribution, constitutively expressed.

The protein localises to the cytoplasmic vesicle. Its subcellular location is the autophagosome membrane. The protein resides in the vacuole membrane. It localises to the cytoplasm. It is found in the cytoskeleton. Ubiquitin-like modifier involved in autophagosomes formation. May mediate the delivery of the autophagosomes to the vacuole via the microtubule cytoskeleton. This is Autophagy-related protein 8e (ATG8E) from Arabidopsis thaliana (Mouse-ear cress).